The chain runs to 454 residues: tRNA modification GTPase MnmE (454 aa).

R23, E80, and K120 together coordinate (6S)-5-formyl-5,6,7,8-tetrahydrofolate. The TrmE-type G domain maps to 216 to 377 (GMKVVIAGRP…LRNHLKQSMG (162 aa)). Residue N226 coordinates K(+). Residues 226-231 (NAGKSS), 245-251 (TDIAGTT), 270-273 (DTAG), 335-338 (NKAD), and 358-360 (SAR) contribute to the GTP site. S230 contacts Mg(2+). T245, I247, and T250 together coordinate K(+). T251 contacts Mg(2+). (6S)-5-formyl-5,6,7,8-tetrahydrofolate is bound at residue K454.

This sequence belongs to the TRAFAC class TrmE-Era-EngA-EngB-Septin-like GTPase superfamily. TrmE GTPase family. As to quaternary structure, homodimer. Heterotetramer of two MnmE and two MnmG subunits. K(+) is required as a cofactor.

The protein resides in the cytoplasm. Functionally, exhibits a very high intrinsic GTPase hydrolysis rate. Involved in the addition of a carboxymethylaminomethyl (cmnm) group at the wobble position (U34) of certain tRNAs, forming tRNA-cmnm(5)s(2)U34. The protein is tRNA modification GTPase MnmE of Escherichia coli (strain SMS-3-5 / SECEC).